The chain runs to 220 residues: Deoxyribose-phosphate aldolase (220 aa).

Asp89 serves as the catalytic Proton donor/acceptor. Residue Lys151 is the Schiff-base intermediate with acetaldehyde of the active site. Lys180 serves as the catalytic Proton donor/acceptor.

The protein belongs to the DeoC/FbaB aldolase family. DeoC type 1 subfamily.

It is found in the cytoplasm. The enzyme catalyses 2-deoxy-D-ribose 5-phosphate = D-glyceraldehyde 3-phosphate + acetaldehyde. The protein operates within carbohydrate degradation; 2-deoxy-D-ribose 1-phosphate degradation; D-glyceraldehyde 3-phosphate and acetaldehyde from 2-deoxy-alpha-D-ribose 1-phosphate: step 2/2. In terms of biological role, catalyzes a reversible aldol reaction between acetaldehyde and D-glyceraldehyde 3-phosphate to generate 2-deoxy-D-ribose 5-phosphate. The sequence is that of Deoxyribose-phosphate aldolase from Lactococcus lactis subsp. lactis (strain IL1403) (Streptococcus lactis).